The following is a 185-amino-acid chain: Large ribosomal subunit protein uL5 (185 aa).

It belongs to the universal ribosomal protein uL5 family. As to quaternary structure, part of the 50S ribosomal subunit; part of the 5S rRNA/L5/L18/L25 subcomplex. Contacts the 5S rRNA and the P site tRNA. Forms a bridge to the 30S subunit in the 70S ribosome.

In terms of biological role, this is one of the proteins that bind and probably mediate the attachment of the 5S RNA into the large ribosomal subunit, where it forms part of the central protuberance. In the 70S ribosome it contacts protein S13 of the 30S subunit (bridge B1b), connecting the 2 subunits; this bridge is implicated in subunit movement. Contacts the P site tRNA; the 5S rRNA and some of its associated proteins might help stabilize positioning of ribosome-bound tRNAs. In Chelativorans sp. (strain BNC1), this protein is Large ribosomal subunit protein uL5.